Here is a 157-residue protein sequence, read N- to C-terminus: Protein Smg homolog (157 aa).

Belongs to the Smg family.

The protein is Protein Smg homolog of Xanthomonas oryzae pv. oryzae (strain MAFF 311018).